Consider the following 512-residue polypeptide: Cytochrome P450 4d1 (512 aa).

Residues E316 and C456 each contribute to the heme site.

This sequence belongs to the cytochrome P450 family. Heme serves as cofactor.

The protein localises to the endoplasmic reticulum membrane. The protein resides in the microsome membrane. Its function is as follows. Involved in the metabolism of insect hormones and in the breakdown of synthetic insecticides. This is Cytochrome P450 4d1 (Cyp4d1) from Drosophila melanogaster (Fruit fly).